The following is a 397-amino-acid chain: NADH-quinone oxidoreductase subunit D (397 aa).

The protein belongs to the complex I 49 kDa subunit family. In terms of assembly, NDH-1 is composed of 14 different subunits. Subunits NuoB, C, D, E, F, and G constitute the peripheral sector of the complex.

It is found in the cell inner membrane. It carries out the reaction a quinone + NADH + 5 H(+)(in) = a quinol + NAD(+) + 4 H(+)(out). Functionally, NDH-1 shuttles electrons from NADH, via FMN and iron-sulfur (Fe-S) centers, to quinones in the respiratory chain. The immediate electron acceptor for the enzyme in this species is believed to be ubiquinone. Couples the redox reaction to proton translocation (for every two electrons transferred, four hydrogen ions are translocated across the cytoplasmic membrane), and thus conserves the redox energy in a proton gradient. The sequence is that of NADH-quinone oxidoreductase subunit D from Magnetococcus marinus (strain ATCC BAA-1437 / JCM 17883 / MC-1).